The following is a 471-amino-acid chain: tRNA-2-methylthio-N(6)-dimethylallyladenosine synthase (471 aa).

The 118-residue stretch at 29–146 folds into the MTTase N-terminal domain; it reads KKFHIKTYGC…LPELIAKVNR (118 aa). Cys-38, Cys-74, Cys-109, Cys-187, Cys-191, and Cys-194 together coordinate [4Fe-4S] cluster. In terms of domain architecture, Radical SAM core spans 173 to 405; that stretch reads RVPQSSAFLS…QQLLKEKQLE (233 aa). Residues 408-467 enclose the TRAM domain; the sequence is KKMIGKTVTVLFDKKHPDKISGRTEYMQQVFSDDSNLLDKIVTMRVEDASTFTLKCTAED.

Belongs to the methylthiotransferase family. MiaB subfamily. In terms of assembly, monomer. The cofactor is [4Fe-4S] cluster.

The protein localises to the cytoplasm. It catalyses the reaction N(6)-dimethylallyladenosine(37) in tRNA + (sulfur carrier)-SH + AH2 + 2 S-adenosyl-L-methionine = 2-methylsulfanyl-N(6)-dimethylallyladenosine(37) in tRNA + (sulfur carrier)-H + 5'-deoxyadenosine + L-methionine + A + S-adenosyl-L-homocysteine + 2 H(+). In terms of biological role, catalyzes the methylthiolation of N6-(dimethylallyl)adenosine (i(6)A), leading to the formation of 2-methylthio-N6-(dimethylallyl)adenosine (ms(2)i(6)A) at position 37 in tRNAs that read codons beginning with uridine. The chain is tRNA-2-methylthio-N(6)-dimethylallyladenosine synthase from Neorickettsia sennetsu (strain ATCC VR-367 / Miyayama) (Ehrlichia sennetsu).